A 600-amino-acid polypeptide reads, in one-letter code: MTKLSHIRNFSIVAHIDHGKSTLADRLIQACGAIEAREMKEQMLDSMDIERERGITIKAQTVRLDYKAKDGKTYQLNLMDTPGHVDFAYEVSRSLAACEGSLLVVDASQGVEAQTLANVYHALDAGHEVVPVLNKIDLPAAEPERVKQQIEDVIGLDTSDAVMISAKTGIGIGDVLEALVNRLPCPEGDADAPLQALLVDSWYDPYLGVIILVRIKNGVLKKGQKIRMMATQAAYQVDSCGYFTPKLVQTTELRPGEMGFFTAAIKAVADTKVGDTVTDDKKPADTPLPGFKPSVPVVWCGLFPIDAADYEDLRDSLAKLRLNDASFQYEPETSAALGFGFRCGFLGLLHLEIIQERLEREFNLDLITTAPSVVYRVHKTNGEMEELHNPADMPDPARIDHMEEPWIKATIMVPDEYLGPVLTLCTERRGQQIDLTYAGSRAMAVYKLPLNEVVFDFYDRLKSISRGYASFDYEVDSYAQSDLVKVSILVNAEPVDALSFVVHRANAESRGRGICTRLKELIPRQMFQIAIQAAIGGRIVARESISALRKDVTAKCYGGDATRKRKLLEKQKEGKKRMRQFGKVEIPQSAFLAALKMGDS.

The region spanning 5–187 is the tr-type G domain; it reads SHIRNFSIVA…ALVNRLPCPE (183 aa). GTP is bound by residues 17–22 and 134–137; these read DHGKST and NKID.

The protein belongs to the TRAFAC class translation factor GTPase superfamily. Classic translation factor GTPase family. LepA subfamily.

The protein localises to the cell inner membrane. It carries out the reaction GTP + H2O = GDP + phosphate + H(+). In terms of biological role, required for accurate and efficient protein synthesis under certain stress conditions. May act as a fidelity factor of the translation reaction, by catalyzing a one-codon backward translocation of tRNAs on improperly translocated ribosomes. Back-translocation proceeds from a post-translocation (POST) complex to a pre-translocation (PRE) complex, thus giving elongation factor G a second chance to translocate the tRNAs correctly. Binds to ribosomes in a GTP-dependent manner. The chain is Elongation factor 4 from Paramagnetospirillum magneticum (strain ATCC 700264 / AMB-1) (Magnetospirillum magneticum).